Here is a 388-residue protein sequence, read N- to C-terminus: Quinolone resistance protein NorA (388 aa).

The next 12 helical transmembrane spans lie at 5–25, 42–62, 69–89, 99–119, 129–149, 157–177, 201–221, 239–259, 269–289, 293–313, 331–351, and 355–375; these read IFVL…VIPV, LLVA…GTLA, LIIC…AVGH, VIGG…IADI, FGYM…IGGF, MPFY…IVLI, WKVF…LSAF, DISI…IYFF, LTFI…LVFA, WSIM…RPAI, LNST…GALF, and IEAP…IVLI.

This sequence belongs to the major facilitator superfamily. TCR/Tet family.

The protein resides in the cell membrane. Involved in quinolone resistance. May constitute a membrane-associated active efflux pump of hydrophilic quinolones. The polypeptide is Quinolone resistance protein NorA (norA) (Staphylococcus aureus (strain Mu50 / ATCC 700699)).